A 611-amino-acid chain; its full sequence is Threonine--tRNA ligase (611 aa).

A catalytic region spans residues 211-509 (DHRKLGTELE…LTEHYAGEFP (299 aa)). C310, H361, and H486 together coordinate Zn(2+).

It belongs to the class-II aminoacyl-tRNA synthetase family. As to quaternary structure, homodimer. It depends on Zn(2+) as a cofactor.

Its subcellular location is the cytoplasm. The catalysed reaction is tRNA(Thr) + L-threonine + ATP = L-threonyl-tRNA(Thr) + AMP + diphosphate + H(+). Catalyzes the attachment of threonine to tRNA(Thr) in a two-step reaction: L-threonine is first activated by ATP to form Thr-AMP and then transferred to the acceptor end of tRNA(Thr). Also edits incorrectly charged L-seryl-tRNA(Thr). The protein is Threonine--tRNA ligase of Nautilia profundicola (strain ATCC BAA-1463 / DSM 18972 / AmH).